Here is a 708-residue protein sequence, read N- to C-terminus: Ribosomal RNA large subunit methyltransferase K/L (708 aa).

Positions 43 to 154 (QGYQITLWTR…RGKITIGINF (112 aa)) constitute a THUMP domain.

It belongs to the methyltransferase superfamily. RlmKL family.

It is found in the cytoplasm. The catalysed reaction is guanosine(2445) in 23S rRNA + S-adenosyl-L-methionine = N(2)-methylguanosine(2445) in 23S rRNA + S-adenosyl-L-homocysteine + H(+). It carries out the reaction guanosine(2069) in 23S rRNA + S-adenosyl-L-methionine = N(2)-methylguanosine(2069) in 23S rRNA + S-adenosyl-L-homocysteine + H(+). In terms of biological role, specifically methylates the guanine in position 2445 (m2G2445) and the guanine in position 2069 (m7G2069) of 23S rRNA. In Shewanella amazonensis (strain ATCC BAA-1098 / SB2B), this protein is Ribosomal RNA large subunit methyltransferase K/L.